The primary structure comprises 124 residues: S-adenosylmethionine decarboxylase proenzyme (124 aa).

Ser-63 acts as the Schiff-base intermediate with substrate; via pyruvic acid in catalysis. Ser-63 carries the post-translational modification Pyruvic acid (Ser); by autocatalysis. Catalysis depends on His-68, which acts as the Proton acceptor; for processing activity. The active-site Proton donor; for catalytic activity is the Cys-83.

The protein belongs to the prokaryotic AdoMetDC family. Type 1 subfamily. In terms of assembly, heterotetramer of two alpha and two beta chains arranged as a dimer of alpha/beta heterodimers. Pyruvate serves as cofactor. Post-translationally, is synthesized initially as an inactive proenzyme. Formation of the active enzyme involves a self-maturation process in which the active site pyruvoyl group is generated from an internal serine residue via an autocatalytic post-translational modification. Two non-identical subunits are generated from the proenzyme in this reaction, and the pyruvate is formed at the N-terminus of the alpha chain, which is derived from the carboxyl end of the proenzyme. The post-translation cleavage follows an unusual pathway, termed non-hydrolytic serinolysis, in which the side chain hydroxyl group of the serine supplies its oxygen atom to form the C-terminus of the beta chain, while the remainder of the serine residue undergoes an oxidative deamination to produce ammonia and the pyruvoyl group blocking the N-terminus of the alpha chain.

It carries out the reaction S-adenosyl-L-methionine + H(+) = S-adenosyl 3-(methylsulfanyl)propylamine + CO2. The protein operates within amine and polyamine biosynthesis; S-adenosylmethioninamine biosynthesis; S-adenosylmethioninamine from S-adenosyl-L-methionine: step 1/1. Catalyzes the decarboxylation of S-adenosylmethionine to S-adenosylmethioninamine (dcAdoMet), the propylamine donor required for the synthesis of the polyamines spermine and spermidine from the diamine putrescine. The chain is S-adenosylmethionine decarboxylase proenzyme from Caldanaerobacter subterraneus subsp. tengcongensis (strain DSM 15242 / JCM 11007 / NBRC 100824 / MB4) (Thermoanaerobacter tengcongensis).